The chain runs to 509 residues: Putative (R)-citramalate synthase CimA (509 aa).

Residues 14–267 form the Pyruvate carboxyltransferase domain; sequence VRIFDTTLRD…DTGIRTERLT (254 aa).

This sequence belongs to the alpha-IPM synthase/homocitrate synthase family. As to quaternary structure, homodimer.

It carries out the reaction pyruvate + acetyl-CoA + H2O = (3R)-citramalate + CoA + H(+). It participates in amino-acid biosynthesis; L-isoleucine biosynthesis; 2-oxobutanoate from pyruvate: step 1/3. Functionally, catalyzes the condensation of pyruvate and acetyl-coenzyme A to form (R)-citramalate. The protein is Putative (R)-citramalate synthase CimA (cimA) of Methanopyrus kandleri (strain AV19 / DSM 6324 / JCM 9639 / NBRC 100938).